Reading from the N-terminus, the 757-residue chain is Activating signal cointegrator 1 complex subunit 2 (757 aa).

Threonine 233 is subject to Phosphothreonine. Serine 447 is modified (phosphoserine). Positions 467-510 constitute a CUE domain; sequence ELDSLISQVKDLLPDLGEGFILACLEYYHYDPEQVINNILEERL. Disordered stretches follow at residues 617–687 and 699–757; these read DDTY…VLRE and KKGY…MIPS. Position 632 is a phosphoserine (serine 632). Residues 657-670 show a composition bias toward acidic residues; the sequence is QEEDDDDEEDDADE. A compositionally biased stretch (basic and acidic residues) spans 671–687; that stretch reads EAPKPDHFVQDPAVLRE. Phosphoserine is present on serine 713. Positions 719 to 734 are enriched in basic and acidic residues; that stretch reads QSRETTQERRKKEANK.

This sequence belongs to the ASCC2 family. In terms of assembly, identified in the ASCC complex that contains ASCC1, ASCC2 and ASCC3. Interacts directly with ASCC3. The ASCC complex interacts with ALKBH3. Interacts (via CUE domain) with 'Lys-63'-linked polyubiquitin chains, but not with 'Lys-48'-linked polyubiquitin chains. Part of the ASC-1 complex, that contains TRIP4, ASCC1, ASCC2 and ASCC3. Component of the RQT (ribosome quality control trigger) complex, that contains ASCC2, ASCC3 and TRIP4. Interacts with CSRP1. Interacts with PRPF8, a component of the spliceosome. Interacts with ZCCHC4. Ubiquitous.

Its subcellular location is the nucleus. The protein localises to the nucleus speckle. In terms of biological role, ubiquitin-binding protein involved in DNA repair and rescue of stalled ribosomes. Plays a role in DNA damage repair as component of the ASCC complex. Recruits ASCC3 and ALKBH3 to sites of DNA damage by binding to polyubiquitinated proteins that have 'Lys-63'-linked polyubiquitin chains. Part of the ASC-1 complex that enhances NF-kappa-B, SRF and AP1 transactivation. Involved in activation of the ribosome quality control (RQC) pathway, a pathway that degrades nascent peptide chains during problematic translation. Specifically recognizes and binds RPS20/uS10 ubiquitinated by ZNF598, promoting recruitment of the RQT (ribosome quality control trigger) complex on stalled ribosomes, followed by disassembly of stalled ribosomes. The polypeptide is Activating signal cointegrator 1 complex subunit 2 (ASCC2) (Homo sapiens (Human)).